The sequence spans 410 residues: Chloroacetanilide N-alkylformylase, ferredoxin reductase component (410 aa).

Residues glycine 14, aspartate 36, lysine 49, valine 82, arginine 130, aspartate 279, and valine 298 each contribute to the FAD site.

This sequence belongs to the FAD-dependent oxidoreductase family. In terms of assembly, the chloroacetanilide N-alkylformylase multicomponent enzyme system is composed of an oxygenase component (CndA) and an electron transfer component formed by a ferredoxin reductase (CndC1) and a ferredoxin (CndB1). In vitro, chloroacetanilide N-alkylformylase assays in which CndB1 is substituted for CndB2 demonstrate that the two enzymes possess nearly identical activities. It depends on FAD as a cofactor.

The enzyme catalyses 2 reduced [2Fe-2S]-[ferredoxin] + NAD(+) + H(+) = 2 oxidized [2Fe-2S]-[ferredoxin] + NADH. Its function is as follows. Component of the chloroacetanilide N-alkylformylase multicomponent enzyme system involved in the degradation of chloroacetanilide herbicides (N-alkoxyalkyl-N-chloroacetyl-substituted aniline derivatives). In vitro, catalyzes the transfers of electrons from ferredoxin (CndB1) to NADH. N-dealkylase utilizes NADH, but not NADPH, as the electron donor. This Rhizorhabdus wittichii (strain DC-6 / KACC 16600) (Sphingomonas wittichii) protein is Chloroacetanilide N-alkylformylase, ferredoxin reductase component.